The chain runs to 162 residues: MAYTNKVAVAVGAAVVFLAVVMNPRWTEAQTYPKLDRLCVMMIPDILEECFTHDRLKPTEDCCNDLKNATMTQVDCLCDNFLESLSFSDLSRTFSAGVLKKCDVSHKYMCQAAKNRGEAKGGRNSTTTCDNSITNTSVGGKNKVATSMSAFGLVAILLFVMF.

The N-terminal stretch at 1–29 is a signal peptide; it reads MAYTNKVAVAVGAAVVFLAVVMNPRWTEA. 4 disulfides stabilise this stretch: Cys39–Cys78, Cys50–Cys62, Cys63–Cys102, and Cys76–Cys110. The N-linked (GlcNAc...) asparagine glycan is linked to Asn68. 2 N-linked (GlcNAc...) asparagine glycosylation sites follow: Asn124 and Asn135. Residue Ser137 is the site of GPI-anchor amidated serine attachment. Positions 138–162 are cleaved as a propeptide — removed in mature form; sequence VGGKNKVATSMSAFGLVAILLFVMF.

Belongs to the plant LTP family.

Its subcellular location is the cell membrane. In terms of biological role, probable lipid transfer protein. This chain is Non-specific lipid transfer protein GPI-anchored 27, found in Arabidopsis thaliana (Mouse-ear cress).